The sequence spans 264 residues: 4-oxalocrotonate decarboxylase (264 aa).

This sequence belongs to the hydratase/decarboxylase family.

It catalyses the reaction (3E)-2-oxohex-3-enedioate + H(+) = 2-oxopent-4-enoate + CO2. It functions in the pathway xenobiotic degradation; toluene degradation. In Pseudomonas putida (Arthrobacter siderocapsulatus), this protein is 4-oxalocrotonate decarboxylase (xylI).